The primary structure comprises 1437 residues: Histone-lysine N-methyltransferase NSD3 (1437 aa).

Disordered regions lie at residues 121 to 157 (PHEI…KLKI) and 181 to 252 (QASE…PVQP). A compositionally biased stretch (pro residues) spans 128 to 139 (PSPPQPPPPPSV). At Ser150 the chain carries Phosphoserine. The KIKL signature appears at 154-157 (KLKI). A compositionally biased stretch (basic residues) spans 187-201 (KSKHESRKEKRKKSN). Positions 202 to 248 (KHDSSRSEERKSHKIPKLEPEEQNRPNERVDTVSEKPREEPVLKEEA) are enriched in basic and acidic residues. Glycyl lysine isopeptide (Lys-Gly) (interchain with G-Cter in SUMO2) cross-links involve residues Lys218 and Lys245. The region spanning 270-333 (VGDLVWSKVG…EKRVREYKGH (64 aa)) is the PWWP 1 domain. Disordered stretches follow at residues 344 to 365 (TKQA…QRER) and 406 to 465 (AKKS…EPPP). Residue Lys413 forms a Glycyl lysine isopeptide (Lys-Gly) (interchain with G-Cter in SUMO2) linkage. Residues 425–445 (VLNTQPEQTNAGEVASSLSST) show a composition bias toward polar residues. Ser457 carries the post-translational modification Phosphoserine. Glycyl lysine isopeptide (Lys-Gly) (interchain with G-Cter in SUMO2) cross-links involve residues Lys502 and Lys532. The segment at 540–696 (QDRLIISTPN…DSSLSRRGTG (157 aa)) is disordered. Residues 546-571 (STPNQRNEKPTQSVSSPEATSGSTGS) show a composition bias toward polar residues. Residues 583-595 (TRSESEKSTEVVP) show a composition bias toward basic and acidic residues. Phosphoserine occurs at positions 585, 587, and 590. Lys628 participates in a covalent cross-link: Glycyl lysine isopeptide (Lys-Gly) (interchain with G-Cter in SUMO2). The residue at position 655 (Ser655) is a Phosphoserine. Residues 682 to 692 (DVQSMDSSLSR) show a composition bias toward polar residues. 3 consecutive PHD-type zinc fingers follow at residues 701–748 (DTVC…CKTG), 749–805 (QHPC…CSME), and 862–955 (VGFC…CKAG). Position 790 is an N6-acetyllysine (Lys790). The PWWP 2 domain occupies 960 to 1022 (YKQIVWVKLG…QGRVFPYVEG (63 aa)). Residues 1033-1069 (INKTFKKALEEAAKRFQELKAQRESKEALEIEKNSRK) are a coiled coil. The AWS domain occupies 1093-1143 (SEIPRCNCKPADENPCGLESECLNRMLQYECHPQVCPAGDRCQNQCFTKRL). Residues 1145 to 1262 (PDAEIIKTER…AGMELTFNYN (118 aa)) form the SET domain. Residue Lys1151 forms a Glycyl lysine isopeptide (Lys-Gly) (interchain with G-Cter in SUMO2) linkage. A Post-SET domain is found at 1269–1285 (GRTECHCGADNCSGFLG). The PHD-type 4; atypical zinc finger occupies 1321–1368 (EDYCFQCGDGGELVMCDKKDCPKAYHLLCLNLTQPPYGKWECPWHQCD).

This sequence belongs to the class V-like SAM-binding methyltransferase superfamily. Histone-lysine methyltransferase family. SET2 subfamily. In terms of assembly, interacts with BRD4. Interacts (via KIKL motif) with BRD3 (via NET domain). Highly expressed in brain, heart and skeletal muscle. Expressed at lower level in liver and lung.

It localises to the nucleus. It is found in the chromosome. The enzyme catalyses L-lysyl(4)-[histone H3] + 2 S-adenosyl-L-methionine = N(6),N(6)-dimethyl-L-lysyl(4)-[histone H3] + 2 S-adenosyl-L-homocysteine + 2 H(+). It catalyses the reaction L-lysyl(27)-[histone H3] + 2 S-adenosyl-L-methionine = N(6),N(6)-dimethyl-L-lysyl(27)-[histone H3] + 2 S-adenosyl-L-homocysteine + 2 H(+). Its function is as follows. Histone methyltransferase. Preferentially dimethylates 'Lys-4' and 'Lys-27' of histone H3 forming H3K4me2 and H3K27me2. H3 'Lys-4' methylation represents a specific tag for epigenetic transcriptional activation, while 'Lys-27' is a mark for transcriptional repression. The protein is Histone-lysine N-methyltransferase NSD3 of Homo sapiens (Human).